The primary structure comprises 154 residues: MGLSDGEWQLVLNVWGKVEADLAGHGQDILIRLFKGHPETLEKFDKFKHLKTEADMKASEDLKKHGITVLTALGAILKKKGHHDAELKPLAQSHATKHKIPIKYLEFISEAIIHVLHSRHPAEFGADAQGAMNKALELFRKDIAAKYKELGFHG.

The Globin domain occupies 2-148; the sequence is GLSDGEWQLV…FRKDIAAKYK (147 aa). Ser4 carries the phosphoserine modification. His65 contributes to the nitrite binding site. Position 65 (His65) interacts with O2. Position 68 is a phosphothreonine (Thr68). Residue His94 coordinates heme b.

The protein belongs to the globin family. As to quaternary structure, monomeric.

It is found in the cytoplasm. It localises to the sarcoplasm. The catalysed reaction is Fe(III)-heme b-[protein] + nitric oxide + H2O = Fe(II)-heme b-[protein] + nitrite + 2 H(+). It carries out the reaction H2O2 + AH2 = A + 2 H2O. Its function is as follows. Monomeric heme protein which primary function is to store oxygen and facilitate its diffusion within muscle tissues. Reversibly binds oxygen through a pentacoordinated heme iron and enables its timely and efficient release as needed during periods of heightened demand. Depending on the oxidative conditions of tissues and cells, and in addition to its ability to bind oxygen, it also has a nitrite reductase activity whereby it regulates the production of bioactive nitric oxide. Under stress conditions, like hypoxia and anoxia, it also protects cells against reactive oxygen species thanks to its pseudoperoxidase activity. In Peponocephala electra (Melon-headed whale), this protein is Myoglobin (MB).